The following is a 383-amino-acid chain: MGASQKNQELIGGLILFSAALLAIVVNNSPLASYYAMLETINVKLGIENLVIDKNLMHWINDGLMAIYFLYIGLEIKREIIVGTLSKPSNIITPAIAAFAGLAMPSLIYLSINHDIKVINGWAIPSATDIAFTLGILALLGTRVPAKLKLLVITIAIFDDIAAIAIIAIFYTKSLSLLSLSLGTLFILAMIICNRIFKINRSSVYVVLGFFAWFCTIKSGVHATLAGFTTALCIPFRENDKDSPANFMEDSLHPWIIYFILPVFAFANAGISFSGISFSILFEPITLGIIWGLFVGKQLGIFSILAVFKKLKWFKLGESFSNLQLYGISLLCGIGFTMSLFIGVLAFNDTHLLNAIKIGVVVGSVLSGFFGYIVLRFIVTNPS.

The next 11 membrane-spanning stretches (helical) occupy residues 10-30 (LIGG…NNSP), 56-76 (LMHW…GLEI), 91-111 (IITP…IYLS), 121-141 (GWAI…ALLG), 150-170 (LLVI…IAIF), 174-194 (SLSL…IICN), 206-226 (VVLG…ATLA), 254-274 (PWII…ISFS), 289-308 (IIWG…LAVF), 327-347 (GISL…VLAF), and 355-375 (AIKI…YIVL).

It belongs to the NhaA Na(+)/H(+) (TC 2.A.33) antiporter family.

The protein resides in the cell inner membrane. It carries out the reaction Na(+)(in) + 2 H(+)(out) = Na(+)(out) + 2 H(+)(in). Na(+)/H(+) antiporter that extrudes sodium in exchange for external protons. This is Na(+)/H(+) antiporter NhaA from Francisella tularensis subsp. tularensis (strain SCHU S4 / Schu 4).